Here is a 281-residue protein sequence, read N- to C-terminus: Polyamine aminopropyltransferase (281 aa).

The region spanning 2-237 (EIWYTEKLEL…GIIGFTFLSN (236 aa)) is the PABS domain. Residue Gln33 coordinates S-methyl-5'-thioadenosine. Residues His64 and Asp88 each coordinate spermidine. Residues Glu108 and 139–140 (DG) each bind S-methyl-5'-thioadenosine. Asp157 functions as the Proton acceptor in the catalytic mechanism. A spermidine-binding site is contributed by 157–160 (DSSD). Pro164 provides a ligand contact to S-methyl-5'-thioadenosine.

It belongs to the spermidine/spermine synthase family. As to quaternary structure, homodimer or homotetramer.

Its subcellular location is the cytoplasm. It catalyses the reaction S-adenosyl 3-(methylsulfanyl)propylamine + putrescine = S-methyl-5'-thioadenosine + spermidine + H(+). It functions in the pathway amine and polyamine biosynthesis; spermidine biosynthesis; spermidine from putrescine: step 1/1. In terms of biological role, catalyzes the irreversible transfer of a propylamine group from the amino donor S-adenosylmethioninamine (decarboxy-AdoMet) to putrescine (1,4-diaminobutane) to yield spermidine. This chain is Polyamine aminopropyltransferase, found in Leptospira biflexa serovar Patoc (strain Patoc 1 / Ames).